A 332-amino-acid chain; its full sequence is Packaging enzyme P4 (332 aa).

Positions 111 to 138 (RWPSEGIYSGVTALMGATGSGKSITLNE) are involved in the regulation and mechanisms of transcription, replication and genome packaging. Position 126–133 (126–133 (GATGSGKS)) interacts with ATP. A disordered region spans residues 310–332 (LERGSVDTDDRNSAPRRGANFSL). Basic and acidic residues predominate over residues 313 to 322 (GSVDTDDRNS).

As to quaternary structure, homohexamer. Part of the packaging complex composed of RDRP, P4 and P7.

It is found in the virion. It carries out the reaction a ribonucleoside 5'-triphosphate + H2O = a ribonucleoside 5'-diphosphate + phosphate + H(+). Packaging motor with helicase and translocase activities. Part of the packaging complex that packages the viral RNA segments, replicate them into a double-stranded form and transcribe them. is one of the structural proteins of the polyhedral procapsid, which is responsible for genomic replication and transcription. Displays single-stranded RNA-stimulated NTPase activity. The polypeptide is Packaging enzyme P4 (P4) (Pseudomonas savastanoi pv. phaseolicola (Pseudomonas syringae pv. phaseolicola)).